Consider the following 430-residue polypeptide: Gamma-glutamyl phosphate reductase (430 aa).

It belongs to the gamma-glutamyl phosphate reductase family.

Its subcellular location is the cytoplasm. The catalysed reaction is L-glutamate 5-semialdehyde + phosphate + NADP(+) = L-glutamyl 5-phosphate + NADPH + H(+). The protein operates within amino-acid biosynthesis; L-proline biosynthesis; L-glutamate 5-semialdehyde from L-glutamate: step 2/2. In terms of biological role, catalyzes the NADPH-dependent reduction of L-glutamate 5-phosphate into L-glutamate 5-semialdehyde and phosphate. The product spontaneously undergoes cyclization to form 1-pyrroline-5-carboxylate. This chain is Gamma-glutamyl phosphate reductase, found in Rhodopseudomonas palustris (strain ATCC BAA-98 / CGA009).